A 270-amino-acid chain; its full sequence is MHYYRYSNAEVSCWYKYLLFSYNIVFWLAGVVFLGVGLWAWSEKGVLSDLTKVTRLHGIDPVVLVLMVGVVMFTLGFAGCVGALRENICLLKFFCGAIVLIFFLELAVAVLAFLFQDWVRDRFREFFESNIKSYRDDIDLQNLIDSLQKANQCCGAYGPEDWDLNVYFNCSGASYSREKCGVPFSCCVPDPAQKVVNTQCGYDVRIQLKSKWDEFIFTKGCIQALEGWLPRNIYIVAGVFIAISLLQIFGIFLARTLISDIEAVKAGHHF.

The Cytoplasmic portion of the chain corresponds to 1–17 (MHYYRYSNAEVSCWYKY). A helical transmembrane segment spans residues 18-38 (LLFSYNIVFWLAGVVFLGVGL). The Extracellular portion of the chain corresponds to 39–61 (WAWSEKGVLSDLTKVTRLHGIDP). A helical membrane pass occupies residues 62-82 (VVLVLMVGVVMFTLGFAGCVG). The Cytoplasmic segment spans residues 83-92 (ALRENICLLK). Residues 93–113 (FFCGAIVLIFFLELAVAVLAF) form a helical membrane-spanning segment. The Extracellular portion of the chain corresponds to 114-232 (LFQDWVRDRF…QALEGWLPRN (119 aa)). The segment at 114–232 (LFQDWVRDRF…QALEGWLPRN (119 aa)) is necessary and sufficient for interaction with ADAM10. 4 cysteine pairs are disulfide-bonded: C153-C221, C154-C186, C170-C180, and C187-C200. N169 carries N-linked (GlcNAc...) asparagine glycosylation. The helical transmembrane segment at 233–253 (IYIVAGVFIAISLLQIFGIFL) threads the bilayer. At 254–270 (ARTLISDIEAVKAGHHF) the chain is on the cytoplasmic side.

It belongs to the tetraspanin (TM4SF) family. In terms of assembly, interacts with ADAM10; the interaction promotes ADAM10 maturation and cell surface expression.

It is found in the cell membrane. In terms of biological role, part of TspanC8 subgroup, composed of 6 members that interact with the transmembrane metalloprotease ADAM10. This interaction is required for ADAM10 exit from the endoplasmic reticulum and for enzymatic maturation and trafficking to the cell surface as well as substrate specificity. Different TspanC8/ADAM10 complexes have distinct substrates. Negatively regulates ADAM10-mediated cleavage of GP6. Promotes ADAM10-mediated cleavage of CDH5. The chain is Tetraspanin-14 (Tspan14) from Mus musculus (Mouse).